The sequence spans 1149 residues: Guanine nucleotide exchange factor DBS (1149 aa).

The CRAL-TRIO domain maps to 52 to 224 (MATASDEIMH…DLGGTLDYCH (173 aa)). One copy of the Spectrin repeat lies at 355–454 (HFEQGFREVK…SEVTRRRDLL (100 aa)). A phosphoserine mark is found at serine 457, serine 462, serine 471, and serine 480. The stretch at 503–528 (LETGAENKIQELNKIYKEYECILNQD) forms a coiled coil. Residues 555–627 (KKLAAKQTRP…RTSSTGEEEE (73 aa)) form a disordered region. A compositionally biased stretch (low complexity) spans 583 to 594 (PGSWRSSENSSS). Basic and acidic residues predominate over residues 607 to 616 (AKSEMSEPRQ). Serine 621 is modified (phosphoserine). Threonine 622 carries the phosphothreonine modification. Positions 632 to 812 (LRRHVMNELL…LGILKAVNDS (181 aa)) constitute a DH domain. In terms of domain architecture, PH spans 830-946 (KLLMQGSFSV…WVNEIRKVLT (117 aa)). The interval 956–1033 (SQHRALEQSH…EAPEEDGGWS (78 aa)) is disordered. Over residues 964–978 (SHSLPLPTPASTSPT) the composition is skewed to low complexity. Phosphoserine is present on residues serine 1033, serine 1034, serine 1041, and serine 1042. The SH3 domain occupies 1055 to 1116 (LVPGKYTVLM…PASSLATLLG (62 aa)).

It belongs to the MCF2 family. As to quaternary structure, interacts with GTP-bound RAC1. Interacts with CDC42. Interacts with RHOA. Interacts with CCPG1, which results in specific inhibition of its exchange activity toward RHOA, but does not affect its activity on CDC42. Mainly phosphorylated on serine. Highest expression in the brain, where it is found in neurons and alpha-tanycytes (at protein level). Detected in brain, and at lower levels in the heart.

The protein resides in the cytoplasm. It localises to the cell membrane. Functionally, guanine nucleotide exchange factor that catalyzes guanine nucleotide exchange on RHOA and CDC42, and thereby contributes to the regulation of RHOA and CDC42 signaling pathways. Seems to lack activity with RAC1. Becomes activated and highly tumorigenic by truncation of the N-terminus. The chain is Guanine nucleotide exchange factor DBS (Mcf2l) from Rattus norvegicus (Rat).